Reading from the N-terminus, the 131-residue chain is Small ribosomal subunit protein eS17A (131 aa).

The protein belongs to the eukaryotic ribosomal protein eS17 family. As to quaternary structure, component of the small ribosomal subunit (SSU). Mature yeast ribosomes consist of a small (40S) and a large (60S) subunit. The 40S small subunit contains 1 molecule of ribosomal RNA (18S rRNA) and at least 33 different proteins. The large 60S subunit contains 3 rRNA molecules (25S, 5.8S and 5S rRNA) and at least 46 different proteins.

Its subcellular location is the cytoplasm. Functionally, component of the ribosome, a large ribonucleoprotein complex responsible for the synthesis of proteins in the cell. The small ribosomal subunit (SSU) binds messenger RNAs (mRNAs) and translates the encoded message by selecting cognate aminoacyl-transfer RNA (tRNA) molecules. The large subunit (LSU) contains the ribosomal catalytic site termed the peptidyl transferase center (PTC), which catalyzes the formation of peptide bonds, thereby polymerizing the amino acids delivered by tRNAs into a polypeptide chain. The nascent polypeptides leave the ribosome through a tunnel in the LSU and interact with protein factors that function in enzymatic processing, targeting, and the membrane insertion of nascent chains at the exit of the ribosomal tunnel. The polypeptide is Small ribosomal subunit protein eS17A (rps1701) (Schizosaccharomyces pombe (strain 972 / ATCC 24843) (Fission yeast)).